A 68-amino-acid chain; its full sequence is Dermaseptin-H5 (68 aa).

A signal peptide spans lysine 1–cysteine 17. Positions glutamate 18 to methionine 38 are excised as a propeptide. Positions glutamate 19–arginine 40 are disordered. The span at glutamate 25–glutamine 35 shows a compositional bias: acidic residues. Leucine amide is present on leucine 65. A propeptide spanning residues glutamate 67–glutamine 68 is cleaved from the precursor.

In terms of tissue distribution, expressed by the skin glands.

The protein resides in the secreted. In terms of biological role, has antibacterial activity against the Gram-negative bacteria E.coli ATCC 11775 (MIC=0.5 uM), and the Gram-positive bacteria S.aureus ATCC 12600 (MIC=0.5 uM) and M.luteus ATCC 49732 (MIC=2.0 uM). Does not inhibit the growth of the fungus C.albicans. Probably acts by disturbing membrane functions with its amphipathic structure. This is Dermaseptin-H5 from Pithecopus azureus (Orange-legged monkey tree frog).